A 216-amino-acid polypeptide reads, in one-letter code: MOB kinase activator-like 1 homolog C (216 aa).

The Zn(2+) site is built by C78, C83, H160, and H165.

The protein belongs to the MOB1/phocein family.

The polypeptide is MOB kinase activator-like 1 homolog C (mobC) (Dictyostelium discoideum (Social amoeba)).